The chain runs to 171 residues: Xanthine-guanine phosphoribosyltransferase (171 aa).

5-phospho-alpha-D-ribose 1-diphosphate is bound by residues 51-52 (RG) and 106-114 (DDLVDSGKT). Residue aspartate 107 coordinates Mg(2+). The guanine site is built by aspartate 110 and isoleucine 153. Residues aspartate 110 and isoleucine 153 each contribute to the xanthine site. GMP is bound by residues 110–114 (DSGKT) and 152–153 (WI).

This sequence belongs to the purine/pyrimidine phosphoribosyltransferase family. XGPT subfamily. In terms of assembly, homotetramer. Mg(2+) serves as cofactor.

It is found in the cell inner membrane. It catalyses the reaction GMP + diphosphate = guanine + 5-phospho-alpha-D-ribose 1-diphosphate. The enzyme catalyses XMP + diphosphate = xanthine + 5-phospho-alpha-D-ribose 1-diphosphate. It carries out the reaction IMP + diphosphate = hypoxanthine + 5-phospho-alpha-D-ribose 1-diphosphate. It participates in purine metabolism; GMP biosynthesis via salvage pathway; GMP from guanine: step 1/1. Its pathway is purine metabolism; XMP biosynthesis via salvage pathway; XMP from xanthine: step 1/1. In terms of biological role, purine salvage pathway enzyme that catalyzes the transfer of the ribosyl-5-phosphate group from 5-phospho-alpha-D-ribose 1-diphosphate (PRPP) to the N9 position of the 6-oxopurines guanine and xanthine to form the corresponding ribonucleotides GMP (guanosine 5'-monophosphate) and XMP (xanthosine 5'-monophosphate), with the release of PPi. To a lesser extent, also acts on hypoxanthine. This chain is Xanthine-guanine phosphoribosyltransferase, found in Ruegeria pomeroyi (strain ATCC 700808 / DSM 15171 / DSS-3) (Silicibacter pomeroyi).